We begin with the raw amino-acid sequence, 5801 residues long: uncharacterized protein (5801 aa).

Disordered regions lie at residues 1114-1136 (DDDN…NKKI), 1827-1846 (KDRS…SINN), 2040-2109 (NNGE…SPLF), 3351-3392 (EKSN…NNSG), 5134-5168 (DNNN…SESD), 5478-5573 (ISDP…EDII), and 5600-5638 (HDKD…ETPG). 5 stretches are compositionally biased toward low complexity: residues 1118–1134 (NNSN…NNNK), 1831–1846 (SSSS…SINN), 2048–2096 (QQLQ…QQQQ), 3353–3392 (SNNN…NNSG), and 5135–5153 (NNNN…NNNN). Acidic residues predominate over residues 5496 to 5573 (DNEEEEEDDD…EDEDEDEDII (78 aa)). The span at 5617–5629 (QQPEKPQQPEKPQ) shows a compositional bias: basic and acidic residues.

This is an uncharacterized protein from Dictyostelium discoideum (Social amoeba).